Here is a 251-residue protein sequence, read N- to C-terminus: Triosephosphate isomerase (251 aa).

9–11 (NWK) contributes to the substrate binding site. The active-site Electrophile is H95. The Proton acceptor role is filled by E167. Substrate-binding positions include G173, S213, and 234 to 235 (GG).

It belongs to the triosephosphate isomerase family. Homodimer.

The protein localises to the cytoplasm. The catalysed reaction is D-glyceraldehyde 3-phosphate = dihydroxyacetone phosphate. It participates in carbohydrate biosynthesis; gluconeogenesis. The protein operates within carbohydrate degradation; glycolysis; D-glyceraldehyde 3-phosphate from glycerone phosphate: step 1/1. In terms of biological role, involved in the gluconeogenesis. Catalyzes stereospecifically the conversion of dihydroxyacetone phosphate (DHAP) to D-glyceraldehyde-3-phosphate (G3P). The polypeptide is Triosephosphate isomerase (Enterococcus faecalis (strain ATCC 700802 / V583)).